We begin with the raw amino-acid sequence, 89 residues long: Small ribosomal subunit protein uS15 (89 aa).

The protein belongs to the universal ribosomal protein uS15 family. In terms of assembly, part of the 30S ribosomal subunit. Forms a bridge to the 50S subunit in the 70S ribosome, contacting the 23S rRNA.

Functionally, one of the primary rRNA binding proteins, it binds directly to 16S rRNA where it helps nucleate assembly of the platform of the 30S subunit by binding and bridging several RNA helices of the 16S rRNA. In terms of biological role, forms an intersubunit bridge (bridge B4) with the 23S rRNA of the 50S subunit in the ribosome. The protein is Small ribosomal subunit protein uS15 of Photorhabdus laumondii subsp. laumondii (strain DSM 15139 / CIP 105565 / TT01) (Photorhabdus luminescens subsp. laumondii).